A 683-amino-acid polypeptide reads, in one-letter code: DNA ligase (683 aa).

NAD(+) contacts are provided by residues 35–39, 84–85, and glutamate 116; these read DTEYD and SL. Residue lysine 118 is the N6-AMP-lysine intermediate of the active site. NAD(+) is bound by residues arginine 139, glutamate 176, lysine 293, and lysine 317. Residues cysteine 419, cysteine 422, cysteine 437, and cysteine 443 each contribute to the Zn(2+) site. A BRCT domain is found at 602-683; it reads AGPQLLAGKT…LMKLLAKGVE (82 aa).

Belongs to the NAD-dependent DNA ligase family. LigA subfamily. It depends on Mg(2+) as a cofactor. Mn(2+) serves as cofactor.

It catalyses the reaction NAD(+) + (deoxyribonucleotide)n-3'-hydroxyl + 5'-phospho-(deoxyribonucleotide)m = (deoxyribonucleotide)n+m + AMP + beta-nicotinamide D-nucleotide.. Functionally, DNA ligase that catalyzes the formation of phosphodiester linkages between 5'-phosphoryl and 3'-hydroxyl groups in double-stranded DNA using NAD as a coenzyme and as the energy source for the reaction. It is essential for DNA replication and repair of damaged DNA. In Dechloromonas aromatica (strain RCB), this protein is DNA ligase.